The following is a 628-amino-acid chain: 1-deoxy-D-xylulose-5-phosphate synthase (628 aa).

Thiamine diphosphate is bound by residues H72 and 113–115; that span reads GHA. D144 is a Mg(2+) binding site. Residues 145–146, N174, Y287, and E370 each bind thiamine diphosphate; that span reads GA. N174 is a binding site for Mg(2+).

Belongs to the transketolase family. DXPS subfamily. Homodimer. The cofactor is Mg(2+). Thiamine diphosphate serves as cofactor.

It carries out the reaction D-glyceraldehyde 3-phosphate + pyruvate + H(+) = 1-deoxy-D-xylulose 5-phosphate + CO2. It participates in metabolic intermediate biosynthesis; 1-deoxy-D-xylulose 5-phosphate biosynthesis; 1-deoxy-D-xylulose 5-phosphate from D-glyceraldehyde 3-phosphate and pyruvate: step 1/1. In terms of biological role, catalyzes the acyloin condensation reaction between C atoms 2 and 3 of pyruvate and glyceraldehyde 3-phosphate to yield 1-deoxy-D-xylulose-5-phosphate (DXP). This is 1-deoxy-D-xylulose-5-phosphate synthase from Prochlorococcus marinus (strain NATL2A).